The sequence spans 215 residues: Cytochrome b6 (215 aa).

A helical transmembrane segment spans residues 32–52; sequence IFYCLGGITLTCFLIQFATGF. Cysteine 35 is a heme c binding site. Heme b is bound by residues histidine 86 and histidine 100. 3 helical membrane-spanning segments follow: residues 90–110, 116–136, and 186–206; these read ASMM…TGGF, LTWV…VTGY, and LHTF…FLMI. The heme b site is built by histidine 187 and histidine 202.

It belongs to the cytochrome b family. PetB subfamily. In terms of assembly, the 4 large subunits of the cytochrome b6-f complex are cytochrome b6, subunit IV (17 kDa polypeptide, PetD), cytochrome f and the Rieske protein, while the 4 small subunits are PetG, PetL, PetM and PetN. The complex functions as a dimer. The cofactor is heme b. Heme c serves as cofactor.

The protein localises to the cellular thylakoid membrane. Its function is as follows. Component of the cytochrome b6-f complex, which mediates electron transfer between photosystem II (PSII) and photosystem I (PSI), cyclic electron flow around PSI, and state transitions. This Synechococcus elongatus protein is Cytochrome b6.